Here is a 427-residue protein sequence, read N- to C-terminus: 3-phosphoshikimate 1-carboxyvinyltransferase (427 aa).

3-phosphoshikimate is bound by residues lysine 22, serine 23, and arginine 27. Lysine 22 is a binding site for phosphoenolpyruvate. The phosphoenolpyruvate site is built by glycine 96 and arginine 124. Residues serine 169, serine 170, glutamine 171, serine 197, aspartate 313, asparagine 336, and lysine 340 each contribute to the 3-phosphoshikimate site. Glutamine 171 contacts phosphoenolpyruvate. Aspartate 313 functions as the Proton acceptor in the catalytic mechanism. Phosphoenolpyruvate contacts are provided by arginine 344, arginine 386, and lysine 411.

This sequence belongs to the EPSP synthase family. As to quaternary structure, monomer.

The protein resides in the cytoplasm. It carries out the reaction 3-phosphoshikimate + phosphoenolpyruvate = 5-O-(1-carboxyvinyl)-3-phosphoshikimate + phosphate. The protein operates within metabolic intermediate biosynthesis; chorismate biosynthesis; chorismate from D-erythrose 4-phosphate and phosphoenolpyruvate: step 6/7. In terms of biological role, catalyzes the transfer of the enolpyruvyl moiety of phosphoenolpyruvate (PEP) to the 5-hydroxyl of shikimate-3-phosphate (S3P) to produce enolpyruvyl shikimate-3-phosphate and inorganic phosphate. The polypeptide is 3-phosphoshikimate 1-carboxyvinyltransferase (Escherichia coli O6:H1 (strain CFT073 / ATCC 700928 / UPEC)).